A 138-amino-acid polypeptide reads, in one-letter code: Nucleoside diphosphate kinase (138 aa).

Residues Lys-9, Phe-57, Arg-85, Thr-91, Arg-102, and Asn-112 each contribute to the ATP site. His-115 (pros-phosphohistidine intermediate) is an active-site residue.

This sequence belongs to the NDK family. Homotetramer. Mg(2+) serves as cofactor.

Its subcellular location is the cytoplasm. The enzyme catalyses a 2'-deoxyribonucleoside 5'-diphosphate + ATP = a 2'-deoxyribonucleoside 5'-triphosphate + ADP. It catalyses the reaction a ribonucleoside 5'-diphosphate + ATP = a ribonucleoside 5'-triphosphate + ADP. Functionally, major role in the synthesis of nucleoside triphosphates other than ATP. The ATP gamma phosphate is transferred to the NDP beta phosphate via a ping-pong mechanism, using a phosphorylated active-site intermediate. The sequence is that of Nucleoside diphosphate kinase from Deinococcus radiodurans (strain ATCC 13939 / DSM 20539 / JCM 16871 / CCUG 27074 / LMG 4051 / NBRC 15346 / NCIMB 9279 / VKM B-1422 / R1).